The sequence spans 135 residues: NADPH-dependent 7-cyano-7-deazaguanine reductase (135 aa).

C48 functions as the Thioimide intermediate in the catalytic mechanism. Residue D55 is the Proton donor of the active site. Substrate contacts are provided by residues I70 to L72 and H89 to E90.

The protein belongs to the GTP cyclohydrolase I family. QueF type 1 subfamily.

The protein resides in the cytoplasm. It carries out the reaction 7-aminomethyl-7-carbaguanine + 2 NADP(+) = 7-cyano-7-deazaguanine + 2 NADPH + 3 H(+). It participates in tRNA modification; tRNA-queuosine biosynthesis. In terms of biological role, catalyzes the NADPH-dependent reduction of 7-cyano-7-deazaguanine (preQ0) to 7-aminomethyl-7-deazaguanine (preQ1). In Prochlorococcus marinus (strain MIT 9303), this protein is NADPH-dependent 7-cyano-7-deazaguanine reductase.